The primary structure comprises 956 residues: Angiomotin-like protein 1 (956 aa).

The interval 197 to 246 (QSQFFRGQQQQQQQQGAVGHGYYMAGGTSQKSRTEGRPTVNRANSGQAHK) is disordered. A phosphoserine mark is found at serine 241 and serine 269. Residues 259–279 (RSLSERIMQLSLERNGAKQHL) are a coiled coil. 3 disordered regions span residues 274–322 (GAKQ…QMMS), 382–405 (PSTMQQHSPMSSQTSSASGPLHSV), and 411–430 (LPMALGAPQPPPAASPSQQL). The span at 282–294 (SGNGKGFKVGGGP) shows a compositional bias: gly residues. Serine 295 bears the Phosphoserine mark. A compositionally biased stretch (polar residues) spans 382 to 398 (PSTMQQHSPMSSQTSSA). 2 coiled-coil regions span residues 438-639 (VERA…WLER) and 665-694 (ALLELVREKEERILALEADMTKWEQKYLEE). At serine 720 the chain carries Phosphoserine. Residues 729-762 (SLEAHIWQEEEEVVQANRRCQDMEYTIKNLHAKI) are a coiled coil. Positions 773–823 (QQRSRKDAGKTDSSSLRPARSVPSIAAATGTHSRQTSLTSSQLAEEKKEEK) are disordered. Phosphoserine occurs at positions 793, 805, and 828. Polar residues predominate over residues 802 to 815 (GTHSRQTSLTSSQL). Disordered regions lie at residues 841-880 (ASAPLLPPPPTSALSSIASTTAASSAHAKTGSKDSSTQTD) and 894-944 (PSRG…LHKP). The segment covering 852 to 866 (SALSSIASTTAASSA) has biased composition (low complexity). Serine 900 is subject to Phosphoserine. Position 902 is a phosphothreonine (threonine 902). Residue serine 906 is modified to Phosphoserine. The PDZ-binding signature appears at 953-956 (EVLI).

Belongs to the angiomotin family. Polyubiquitinated by NEDD4, leading to proteasomal degradation.

It localises to the cell junction. The protein resides in the tight junction. In terms of biological role, inhibits the Wnt/beta-catenin signaling pathway, probably by recruiting CTNNB1 to recycling endosomes and hence preventing its translocation to the nucleus. The protein is Angiomotin-like protein 1 (AMOTL1) of Homo sapiens (Human).